Here is a 293-residue protein sequence, read N- to C-terminus: NAD kinase (293 aa).

Asp-72 functions as the Proton acceptor in the catalytic mechanism. Residues 72 to 73, 146 to 147, Arg-157, Arg-174, Asp-176, 187 to 192, and Gln-247 each bind NAD(+); these read DG, ND, and TAYALS.

Belongs to the NAD kinase family. A divalent metal cation is required as a cofactor.

It localises to the cytoplasm. The enzyme catalyses NAD(+) + ATP = ADP + NADP(+) + H(+). Its function is as follows. Involved in the regulation of the intracellular balance of NAD and NADP, and is a key enzyme in the biosynthesis of NADP. Catalyzes specifically the phosphorylation on 2'-hydroxyl of the adenosine moiety of NAD to yield NADP. The protein is NAD kinase of Teredinibacter turnerae (strain ATCC 39867 / T7901).